Here is a 40-residue protein sequence, read N- to C-terminus: Photosystem II reaction center protein Y (40 aa).

A helical transmembrane segment spans residues 4-22; it reads LLVITLPILAAIGWVTLNI.

Belongs to the PsbY family. PSII is composed of 1 copy each of membrane proteins PsbA, PsbB, PsbC, PsbD, PsbE, PsbF, PsbH, PsbI, PsbJ, PsbK, PsbL, PsbM, PsbT, PsbX, PsbY, Psb30/Ycf12, peripheral proteins PsbO, CyanoQ (PsbQ), PsbU, PsbV and a large number of cofactors. It forms dimeric complexes.

Its subcellular location is the cellular thylakoid membrane. In terms of biological role, loosely associated component of the core of photosystem II (PSII), it is not always seen in crystals. PSII is a light-driven water plastoquinone oxidoreductase, using light energy to abstract electrons from H(2)O, generating a proton gradient subsequently used for ATP formation. This Prochlorococcus marinus (strain SARG / CCMP1375 / SS120) protein is Photosystem II reaction center protein Y.